The primary structure comprises 512 residues: Glycosyltransferase sdnJ (512 aa).

Residues 1 to 24 form the signal peptide; it reads MHAKRPSVLFFTISDFGYVNVVLA. N-linked (GlcNAc...) asparagine glycosylation occurs at asparagine 207.

The protein belongs to the UDP-glycosyltransferase family.

It catalyses the reaction sordaricin + GDP-6-deoxy-alpha-D-altrose = 4'-O-demethylsordarin + GDP + H(+). The protein operates within antibiotic biosynthesis. Functionally, glycosyltransferase; part of the gene cluster that mediates the biosynthesis of sordarin and hypoxysordarin, glycoside antibiotics with a unique tetracyclic diterpene aglycone structure. First, the geranylgeranyl diphosphate synthase sdnC constructs GGDP from farnesyl diphosphate and isopentenyl diphosphate. The diterpene cyclase sdnA then catalyzes the cyclization of GGDP to afford cycloaraneosene. Cycloaraneosene is then hydroxylated four times by the putative cytochrome P450 monooxygenases sdnB, sdnE, sdnF and sdnH to give a hydroxylated cycloaraneosene derivative such as cycloaraneosene-8,9,13,19-tetraol. Although the order of the hydroxylations is unclear, at least C8, C9 and C13 of the cycloaraneosene skeleton are hydroxylated before the sordaricin formation. Dehydration of the 13-hydroxy group of the hydroxylated cycloaraneosene derivative might be catalyzed by an unassigned hypothetical protein such as sdnG and sdnP to construct the cyclopentadiene moiety. The FAD-dependent oxidoreductase sdnN is proposed to catalyze the oxidation at C9 of the hydroxylated cycloaraneosene derivative and also catalyze the Baeyer-Villiger oxidation to give the lactone intermediate. The presumed lactone intermediate would be hydrolyzed to give an acrolein moiety and a carboxylate moiety. Then, [4+2]cycloaddition would occur between the acrolein moiety and the cyclopentadiene moiety to give sordaricin. SdnN might also be involved in the [4+2]cycloaddition after the hypothesized oxidation to accommodate the oxidized product and prompt the [4+2]cycloaddition. GDP-6-deoxy-D-altrose may be biosynthesized from GDP-D-mannose by the putative GDP-mannose-4,6-dehydratase sdnI and the short-chain dehydrogenase sdnK. The glycosyltransferase sdnJ catalyzes the attachment of 6-deoxy-D-altrose onto the 19-hydroxy group of sordaricin to give 4'-O-demethylsordarin. The methyltransferase sdnD would complete the biosynthesis of sordarin. Sordarin can be further modified into hypoxysordarin. The unique acyl chain at the 3'-hydroxy group of hypoxysordarin would be constructed by an iterative type I PKS sdnO and the trans-acting polyketide methyltransferase sdnL. SdnL would be responsible for the introduction of an alpha-methyl group of the polyketide chain. Alternatively, the beta-lactamase-like protein sdnR might be responsible for the cleavage and transfer of the polyketide chain from the PKS sdnO to sordarin. Two putative cytochrome P450 monooxygenases, sdnQ and sdnT, might catalyze the epoxidations of the polyketide chain to complete the biosynthesis of hypoxysordarin. Transcriptional regulators sdnM and sdnS are presumably encoded for the transcriptional regulation of the expression of the sdn gene cluster. The sequence is that of Glycosyltransferase sdnJ from Sordaria araneosa (Pleurage araneosa).